Here is a 289-residue protein sequence, read N- to C-terminus: 4-diphosphocytidyl-2-C-methyl-D-erythritol kinase (289 aa).

K16 is a catalytic residue. Residue 99–109 (PMGGGLGGGSS) coordinates ATP. The active site involves D141.

The protein belongs to the GHMP kinase family. IspE subfamily.

The catalysed reaction is 4-CDP-2-C-methyl-D-erythritol + ATP = 4-CDP-2-C-methyl-D-erythritol 2-phosphate + ADP + H(+). The protein operates within isoprenoid biosynthesis; isopentenyl diphosphate biosynthesis via DXP pathway; isopentenyl diphosphate from 1-deoxy-D-xylulose 5-phosphate: step 3/6. Functionally, catalyzes the phosphorylation of the position 2 hydroxy group of 4-diphosphocytidyl-2C-methyl-D-erythritol. The sequence is that of 4-diphosphocytidyl-2-C-methyl-D-erythritol kinase from Ralstonia pickettii (strain 12J).